The primary structure comprises 101 residues: Small ribosomal subunit protein uS10 (101 aa).

Belongs to the universal ribosomal protein uS10 family. Part of the 30S ribosomal subunit.

Its function is as follows. Involved in the binding of tRNA to the ribosomes. This Christiangramia forsetii (strain DSM 17595 / CGMCC 1.15422 / KT0803) (Gramella forsetii) protein is Small ribosomal subunit protein uS10.